We begin with the raw amino-acid sequence, 560 residues long: DNA ligase B (560 aa).

Lys124 serves as the catalytic N6-AMP-lysine intermediate.

It belongs to the NAD-dependent DNA ligase family. LigB subfamily.

It catalyses the reaction NAD(+) + (deoxyribonucleotide)n-3'-hydroxyl + 5'-phospho-(deoxyribonucleotide)m = (deoxyribonucleotide)n+m + AMP + beta-nicotinamide D-nucleotide.. Catalyzes the formation of phosphodiester linkages between 5'-phosphoryl and 3'-hydroxyl groups in double-stranded DNA using NAD as a coenzyme and as the energy source for the reaction. This is DNA ligase B from Escherichia coli (strain ATCC 8739 / DSM 1576 / NBRC 3972 / NCIMB 8545 / WDCM 00012 / Crooks).